Here is a 365-residue protein sequence, read N- to C-terminus: Methionine import ATP-binding protein MetN (365 aa).

Positions Ile-17–Leu-256 constitute an ABC transporter domain. Gly-53 to Ser-60 lines the ATP pocket. The disordered stretch occupies residues Ser-346–His-365.

Belongs to the ABC transporter superfamily. Methionine importer (TC 3.A.1.24) family. As to quaternary structure, the complex is composed of two ATP-binding proteins (MetN), two transmembrane proteins (MetI) and a solute-binding protein (MetQ).

The protein resides in the cell membrane. It carries out the reaction L-methionine(out) + ATP + H2O = L-methionine(in) + ADP + phosphate + H(+). The catalysed reaction is D-methionine(out) + ATP + H2O = D-methionine(in) + ADP + phosphate + H(+). Functionally, part of the ABC transporter complex MetNIQ involved in methionine import. Responsible for energy coupling to the transport system. The polypeptide is Methionine import ATP-binding protein MetN (Cutibacterium acnes (strain DSM 16379 / KPA171202) (Propionibacterium acnes)).